Consider the following 740-residue polypeptide: Catalase-peroxidase (740 aa).

Positions 1–32 are disordered; it reads MPEDRPIEDSPPIGEAQTDAPAGGCPAGFGRI. A cross-link (tryptophyl-tyrosyl-methioninium (Trp-Tyr) (with M-263)) is located at residues 113–237; it reads WHAAGTYRVS…LAAVQMGLIY (125 aa). Residue His114 is the Proton acceptor of the active site. The tryptophyl-tyrosyl-methioninium (Tyr-Met) (with W-113) cross-link spans 237 to 263; sequence YVNPEGPNGNPDPQASAIDIRETFGRM. His278 contributes to the heme b binding site.

Belongs to the peroxidase family. Peroxidase/catalase subfamily. As to quaternary structure, homodimer or homotetramer. Heme b serves as cofactor. Post-translationally, formation of the three residue Trp-Tyr-Met cross-link is important for the catalase, but not the peroxidase activity of the enzyme.

It catalyses the reaction H2O2 + AH2 = A + 2 H2O. The enzyme catalyses 2 H2O2 = O2 + 2 H2O. Bifunctional enzyme with both catalase and broad-spectrum peroxidase activity. May play a role in the intracellular survival of mycobacteria. This Mycolicibacterium smegmatis (Mycobacterium smegmatis) protein is Catalase-peroxidase.